The following is a 1024-amino-acid chain: Beta-galactosidase (1024 aa).

The substrate site is built by Asn-103 and Asp-202. Asp-202 serves as a coordination point for Na(+). Residues Glu-417, His-419, and Glu-462 each coordinate Mg(2+). Residues Glu-462 and 538-541 (EYAH) each bind substrate. Residue Glu-462 is the Proton donor of the active site. The Nucleophile role is filled by Glu-538. Residue Asn-598 participates in Mg(2+) binding. 2 residues coordinate Na(+): Phe-602 and Asn-605. 2 residues coordinate substrate: Asn-605 and Trp-1000.

This sequence belongs to the glycosyl hydrolase 2 family. As to quaternary structure, homotetramer. It depends on Mg(2+) as a cofactor. The cofactor is Na(+).

The catalysed reaction is Hydrolysis of terminal non-reducing beta-D-galactose residues in beta-D-galactosides.. This Escherichia coli (strain ATCC 8739 / DSM 1576 / NBRC 3972 / NCIMB 8545 / WDCM 00012 / Crooks) protein is Beta-galactosidase.